The primary structure comprises 242 residues: Small ribosomal subunit protein uS7m (242 aa).

A mitochondrion-targeting transit peptide spans 1 to 37 (MAAPTAKVSRGWSGLALGVRIAVLRLPGLTQVRWSRY). An N6-acetyllysine modification is found at Lys-228.

It belongs to the universal ribosomal protein uS7 family. Component of the mitochondrial ribosome small subunit (28S) which comprises a 12S rRNA and about 30 distinct proteins.

The protein resides in the mitochondrion. The polypeptide is Small ribosomal subunit protein uS7m (MRPS7) (Bos taurus (Bovine)).